The chain runs to 536 residues: Chaperonin GroEL (536 aa).

ATP contacts are provided by residues 29-32 (TLGP), 86-90 (DGTTT), glycine 413, and aspartate 494.

This sequence belongs to the chaperonin (HSP60) family. As to quaternary structure, forms a cylinder of 14 subunits composed of two heptameric rings stacked back-to-back. Interacts with the co-chaperonin GroES.

It is found in the cytoplasm. The catalysed reaction is ATP + H2O + a folded polypeptide = ADP + phosphate + an unfolded polypeptide.. Functionally, together with its co-chaperonin GroES, plays an essential role in assisting protein folding. The GroEL-GroES system forms a nano-cage that allows encapsulation of the non-native substrate proteins and provides a physical environment optimized to promote and accelerate protein folding. The chain is Chaperonin GroEL from Acholeplasma laidlawii (strain PG-8A).